The chain runs to 417 residues: uncharacterized protein (417 aa).

A run of 9 helical transmembrane segments spans residues 1-21, 32-52, 96-116, 168-188, 192-212, 261-281, 286-306, 351-371, and 392-412; these read MSVLSSILGMVVLIAIAVLLS, VVGALAIQVGFAALILYVPAG, VLPIIVFFSGLISVLYYLGIM, LFAIMVGGTASIAGSVMAGYA, VPLTYLIAASFMAAPAGLLFA, IAFVGLIALINGILSGVGGWF, LTLQSIFGLIFKPLAYLIGVT, AIITFALCGFANFSSIAILIG, and VIAGTLANLMSATIAGLFIGL.

Belongs to the concentrative nucleoside transporter (CNT) (TC 2.A.41) family.

The protein localises to the cell inner membrane. This is an uncharacterized protein from Haemophilus influenzae (strain ATCC 51907 / DSM 11121 / KW20 / Rd).